Here is a 546-residue protein sequence, read N- to C-terminus: Alpha-isocomene synthase (546 aa).

D299, D303, D443, and E451 together coordinate Mg(2+). The short motif at 299–303 (DDTYD) is the DDXXD motif element.

Belongs to the terpene synthase family. Tpsa subfamily. Requires Mg(2+) as cofactor. Mn(2+) is required as a cofactor. Highly expressed in roots, lower levels in stems and leaves and detected in disk florets, but not in ray florets.

It carries out the reaction (2E,6E)-farnesyl diphosphate = (-)-alpha-isocomene + diphosphate. The protein operates within secondary metabolite biosynthesis; terpenoid biosynthesis. Sesquiterpene synthase involved in the biosynthesis of alpha-isocomene as the major product and detectable amounts of beta-caryophyllene, beta-isocomene, silphinene and modeph-2-ene. Produces exclusively the (-)-(E)-beta caryophyllene enantiomer. The protein is Alpha-isocomene synthase of Matricaria chamomilla var. recutita (German chamomile).